A 515-amino-acid polypeptide reads, in one-letter code: tRNA-2-methylthio-N(6)-dimethylallyladenosine synthase (515 aa).

In terms of domain architecture, MTTase N-terminal spans 25–140 (KTYQVRTFGC…LPALLNRARH (116 aa)). The [4Fe-4S] cluster site is built by Cys34, Cys69, Cys103, Cys177, Cys181, and Cys184. In terms of domain architecture, Radical SAM core spans 163-393 (RDSVYAGWVS…TALQDRIAAE (231 aa)). Residues 396-466 (AKQLGRKVEV…AFHLVADPAG (71 aa)) form the TRAM domain. Residues 482-515 (DRSQADSCGVPAAGAASGKAGVSLGMPSLPTRRA) form a disordered region. Residues 490-506 (GVPAAGAASGKAGVSLG) show a composition bias toward low complexity.

It belongs to the methylthiotransferase family. MiaB subfamily. Monomer. [4Fe-4S] cluster is required as a cofactor.

Its subcellular location is the cytoplasm. It catalyses the reaction N(6)-dimethylallyladenosine(37) in tRNA + (sulfur carrier)-SH + AH2 + 2 S-adenosyl-L-methionine = 2-methylsulfanyl-N(6)-dimethylallyladenosine(37) in tRNA + (sulfur carrier)-H + 5'-deoxyadenosine + L-methionine + A + S-adenosyl-L-homocysteine + 2 H(+). Functionally, catalyzes the methylthiolation of N6-(dimethylallyl)adenosine (i(6)A), leading to the formation of 2-methylthio-N6-(dimethylallyl)adenosine (ms(2)i(6)A) at position 37 in tRNAs that read codons beginning with uridine. In Paenarthrobacter aurescens (strain TC1), this protein is tRNA-2-methylthio-N(6)-dimethylallyladenosine synthase.